A 775-amino-acid chain; its full sequence is Subtilisin-like protease SBT1.2 (775 aa).

Residues 1–20 (MEPKPFFLCIIFLLFCSSSS) form the signal peptide. Residues 27 to 111 (TYIVQLHPNS…AVRPDHVLQV (85 aa)) enclose the Inhibitor I9 domain. One can recognise a Peptidase S8 domain in the interval 116-618 (SYKFLGLDGF…AGHVNPQKAI (503 aa)). Catalysis depends on charge relay system residues D146 and H222. In terms of domain architecture, PA spans 388-470 (GGDKGSEFCL…YTESVLLKAY (83 aa)). N472 and N544 each carry an N-linked (GlcNAc...) asparagine glycan. Catalysis depends on S552, which acts as the Charge relay system. N-linked (GlcNAc...) asparagine glycosylation is present at N652.

It belongs to the peptidase S8 family. In terms of tissue distribution, mostly expressed in leaves and cotyledons (especially in epidermal cells), and, to a lower extent, in floral buds, stems, and siliques. Strongly expressed in stomatal precursor cells (meristemoids and guard mother cells).

The protein resides in the secreted. Its subcellular location is the extracellular space. It is found in the apoplast. The protein localises to the cell membrane. In terms of biological role, serine protease involved in the negative regulation of stomatal density and distribution. Not active on EPFL6 (AC Q1PEY6). Positive regulator of water use efficiency (WUE). The polypeptide is Subtilisin-like protease SBT1.2 (Arabidopsis thaliana (Mouse-ear cress)).